The sequence spans 497 residues: Protein FAM114A2 (497 aa).

A disordered region spans residues 1–54; that stretch reads MSDKDPPESPVVTGVASTLKDENCEPVEKPEDKSQPVVSTRKRPETKPSSDLEA. Residues 19–34 are compositionally biased toward basic and acidic residues; that stretch reads LKDENCEPVEKPEDKS. A phosphoserine mark is found at S84 and S205. The interval 344-364 is disordered; the sequence is VAEKEEGEKESEAGNTEEAQK.

This sequence belongs to the FAM114 family.

This Mus musculus (Mouse) protein is Protein FAM114A2 (Fam114a2).